A 285-amino-acid polypeptide reads, in one-letter code: Probable endonuclease 4 (285 aa).

Zn(2+)-binding residues include His69, His109, Glu145, Asp179, His182, His216, Asp229, His231, and Glu261.

It belongs to the AP endonuclease 2 family. Zn(2+) is required as a cofactor.

It catalyses the reaction Endonucleolytic cleavage to 5'-phosphooligonucleotide end-products.. Its function is as follows. Endonuclease IV plays a role in DNA repair. It cleaves phosphodiester bonds at apurinic or apyrimidinic (AP) sites, generating a 3'-hydroxyl group and a 5'-terminal sugar phosphate. The polypeptide is Probable endonuclease 4 (Salmonella heidelberg (strain SL476)).